Consider the following 249-residue polypeptide: Acidic leucine-rich nuclear phosphoprotein 32 family member A (249 aa).

Thr-15 carries the phosphothreonine modification. Residue Ser-17 is modified to Phosphoserine. 4 LRR repeats span residues 18–38 (DVKE…EGLT), 43–64 (ELEF…PKLN), 65–87 (KLKK…AEKC), and 89–110 (NLTH…EPLK). Residues 123–161 (CEVTNLNDYRENVFKLLPQLTYLDGYDRDDKEAPDSDAE) enclose the LRRCT domain. The segment covering 147-156 (GYDRDDKEAP) has biased composition (basic and acidic residues). Positions 147 to 249 (GYDRDDKEAP…EPEDEGEDDD (103 aa)) are disordered. The tract at residues 150 to 174 (RDDKEAPDSDAEGYVEGLDDEEEDE) is necessary for tumor-suppressive function. Residues 157–230 (DSDAEGYVEG…DEEDEEELGE (74 aa)) show a composition bias toward acidic residues. Phosphoserine; by CK2 is present on residues Ser-158 and Ser-204. The interaction with E4F1 stretch occupies residues 165–249 (EGLDDEEEDE…EPEDEGEDDD (85 aa)).

This sequence belongs to the ANP32 family. Component of the SET complex, composed of at least ANP32A, APEX1, HMGB2, NME1, SET and TREX1. Directly interacts with SET. Interacts with ATXN1/SCA1. Interacts with MAP1B. Interacts with ELAVL1. Part of the INHAT (inhibitor of histone acetyltransferases) complex. Interacts with E4F1. In terms of assembly, (Microbial infection) Interacts (via C-terminus) with influenza virus A protein PB2; this interaction promotes viral replication. As to quaternary structure, (Microbial infection) Interacts (via C-terminus) with influenza virus B protein PB2; this interaction promotes viral replication. (Microbial infection) Interacts (via C-terminus) with influenza virus C protein PB2; this interaction promotes viral replication by bridging viral replicase dimers together. Phosphorylated on serine residues, at least in part by casein kinase 2/CK2. Post-translationally, the N-terminus is blocked. In terms of processing, some glutamate residues are glycylated by TTLL8. This modification occurs exclusively on glutamate residues and results in a glycine chain on the gamma-carboxyl group. Expressed in all tissues tested. Highly expressed in kidney and skeletal muscle, moderate levels of expression in brain, placenta and pancreas, and weakly expressed in lung. Found in all regions of the brain examined (amygdala, caudate nucleus, corpus callosum, hippocampus and thalamus), with highest levels in amygdala.

The protein localises to the nucleus. Its subcellular location is the cytoplasm. It localises to the endoplasmic reticulum. Functionally, multifunctional protein that is involved in the regulation of many processes including tumor suppression, apoptosis, cell cycle progression or transcription. Promotes apoptosis by favouring the activation of caspase-9/CASP9 and allowing apoptosome formation. In addition, plays a role in the modulation of histone acetylation and transcription as part of the INHAT (inhibitor of histone acetyltransferases) complex. Inhibits the histone-acetyltranferase activity of EP300/CREBBP (CREB-binding protein) and EP300/CREBBP-associated factor by histone masking. Preferentially binds to unmodified histone H3 and sterically inhibiting its acetylation and phosphorylation leading to cell growth inhibition. Participates in other biochemical processes such as regulation of mRNA nuclear-to-cytoplasmic translocation and stability by its association with ELAVL1 (Hu-antigen R). Plays a role in E4F1-mediated transcriptional repression as well as inhibition of protein phosphatase 2A. Its function is as follows. (Microbial infection) Plays an essential role in influenza A, B and C viral genome replication. Mechanistically, mediates the assembly of the viral replicase asymmetric dimers composed of PB1, PB2 and PA via its N-terminal region. Also plays an essential role in foamy virus mRNA export from the nucleus. In Homo sapiens (Human), this protein is Acidic leucine-rich nuclear phosphoprotein 32 family member A (ANP32A).